The chain runs to 124 residues: Fluoride-specific ion channel FluC (124 aa).

Transmembrane regions (helical) follow at residues 5–25, 32–52, 67–87, and 96–116; these read VYIALLGALGCLCRYFLSGLV, SFPYGTLAVNLIGAFLIGLVM, FAITIGFLGGLTTFSTFSFET, and LLIAFVNVLVSVVACLTCTWI. Na(+) contacts are provided by Gly-75 and Thr-78.

The protein belongs to the fluoride channel Fluc/FEX (TC 1.A.43) family.

The protein localises to the cell inner membrane. It carries out the reaction fluoride(in) = fluoride(out). Its activity is regulated as follows. Na(+) is not transported, but it plays an essential structural role and its presence is essential for fluoride channel function. Fluoride-specific ion channel. Important for reducing fluoride concentration in the cell, thus reducing its toxicity. The chain is Fluoride-specific ion channel FluC from Geobacter sp. (strain M21).